The sequence spans 329 residues: MTTQQIDLQGPGPWGFRLVGGKDFEQPLAISRVTPGSKAALANLCIGDVITAIDGENTSNMTHLEAQNRIKGCTDNLTLTVARSEHKVWSPLVTEEGKRHPYKMNLASEPQEVLHIGSAHNRSAMPFTASPASSTTARVITNQYNNPAGLYSSENISNFNNALESKTAASGVEANSRPLDHAQPPSSLVIDKESEVYKMLQEKQELNEPPKQSTSFLVLQEILESEEKGDPNKPSGFRSVKAPVTKVAASIGNAQKLPMCDKCGTGIVGVFVKLRDRHRHPECYVCTDCGTNLKQKGHFFVEDQIYCEKHARERVTPPEGYEVVTVFPK.

Threonine 2 bears the N-acetylthreonine mark. In terms of domain architecture, PDZ spans 3–85; that stretch reads TQQIDLQGPG…NLTLTVARSE (83 aa). Serine 90 and serine 130 each carry phosphoserine. Tyrosine 144 is modified (phosphotyrosine). The LIM zinc-binding domain occupies 258–317; that stretch reads PMCDKCGTGIVGVFVKLRDRHRHPECYVCTDCGTNLKQKGHFFVEDQIYCEKHARERVTP. Residues cysteine 260, cysteine 263, histidine 280, cysteine 283, cysteine 286, cysteine 289, cysteine 307, and histidine 310 each contribute to the Zn(2+) site. Threonine 316 carries the phosphothreonine modification. Tyrosine 321 is subject to Phosphotyrosine.

In terms of assembly, interacts with ACTN1, ACTN2 and ACTN4. Interacts with PDLIM4. In terms of tissue distribution, strongly expressed in the heart and skeletal muscle, moderately expressed in the spleen, small intestine, colon, placenta, and lung. A lower level expression is seen in liver, thymus, kidney, prostate and pancreas and is not found in the brain, testis, ovary, and peripheral blood leukocytes.

The protein resides in the cytoplasm. The protein localises to the cytoskeleton. It localises to the myofibril. It is found in the sarcomere. Its subcellular location is the z line. Its function is as follows. Cytoskeletal protein that may act as an adapter that brings other proteins (like kinases) to the cytoskeleton. Involved in assembly, disassembly and directioning of stress fibers in fibroblasts. Required for the localization of ACTN1 and PALLD to stress fibers. Required for cell migration and in maintaining cell polarity of fibroblasts. This Homo sapiens (Human) protein is PDZ and LIM domain protein 1 (PDLIM1).